A 184-amino-acid polypeptide reads, in one-letter code: MAKHNEKELADTSKFLSFVLRHKPEAIGIVLDREGWADIDKLILCAQKAGKRLTRALLDTVVATSDKKRFSYSSDGRCIRAVQGHSTSQVAISFAEKTPPQFLYHGTASRFLDEIKKQGLIAGDRHYVHLSADEATARKVGARHGSPVVLTVKAQEMAKRGIPFWQAENGVWLTSTVAVEFLEW.

Belongs to the KptA/TPT1 family.

Removes the 2'-phosphate from RNA via an intermediate in which the phosphate is ADP-ribosylated by NAD followed by a presumed transesterification to release the RNA and generate ADP-ribose 1''-2''-cyclic phosphate (APPR&gt;P). May function as an ADP-ribosylase. The chain is Probable RNA 2'-phosphotransferase from Shigella boydii serotype 18 (strain CDC 3083-94 / BS512).